A 191-amino-acid polypeptide reads, in one-letter code: Shikimate kinase (191 aa).

Residue 24 to 29 participates in ATP binding; it reads GSGKTS. Position 28 (threonine 28) interacts with Mg(2+). Positions 46, 70, and 92 each coordinate substrate. Arginine 130 contributes to the ATP binding site. Residue arginine 149 participates in substrate binding.

The protein belongs to the shikimate kinase family. Monomer. Requires Mg(2+) as cofactor.

It is found in the cytoplasm. The enzyme catalyses shikimate + ATP = 3-phosphoshikimate + ADP + H(+). It participates in metabolic intermediate biosynthesis; chorismate biosynthesis; chorismate from D-erythrose 4-phosphate and phosphoenolpyruvate: step 5/7. Its function is as follows. Catalyzes the specific phosphorylation of the 3-hydroxyl group of shikimic acid using ATP as a cosubstrate. This chain is Shikimate kinase, found in Synechococcus sp. (strain CC9902).